The chain runs to 534 residues: Dolichol kinase (534 aa).

At 1 to 16 (MTRQCPPQESGAALSG) the chain is on the cytoplasmic side. Residues 17 to 37 (SVLAEAAVVFAVVLSIHAAVW) traverse the membrane as a helical segment. Residues 38 to 72 (DRYSWCAVALAVQAFYVQYKWDRLLQQGNAVFQFR) are Extracellular-facing. The helical transmembrane segment at 73 to 93 (MSANSGLLPASMVMPLLGLVM) threads the bilayer. The Cytoplasmic portion of the chain corresponds to 94 to 109 (KERCQTAGNPYFERFG). The helical transmembrane segment at 110-130 (IVVAATGMAVALFSSVLALGI) threads the bilayer. At 131–132 (TR) the chain is on the extracellular side. A helical transmembrane segment spans residues 133-153 (PVPTNTCAISGLAGGVIIYIM). At 154-161 (RHSLSVGE) the chain is on the cytoplasmic side. Residues 162 to 182 (VIEVLEVLLIFVYLNMILLYL) form a helical membrane-spanning segment. Over 183 to 186 (LPRC) the chain is Extracellular. Residues 187 to 207 (FTPGEALLVLGGISFVLNQLI) traverse the membrane as a helical segment. Over 208–220 (KRSLTESQGDPVD) the chain is Cytoplasmic. A helical membrane pass occupies residues 221 to 241 (FFLLVVVVGMVLMGVFFSTLF). Residues 242–252 (VFMDSGTWASS) lie on the Extracellular side of the membrane. Residues 253-273 (IFFHLMTCVLGLGVVLPWLHW) traverse the membrane as a helical segment. The Cytoplasmic segment spans residues 274–293 (LIRRNPLLWLLQFLFYTETR). The helical transmembrane segment at 294–314 (IYLLAYWSLLASVACLVVLYQ) threads the bilayer. Residues 315 to 333 (NAKRSSSESKKHRAPTITR) are Extracellular-facing. A helical transmembrane segment spans residues 334-350 (KYFHFIVVATYIPGIIF). Residues 351 to 355 (DRPLL) are Cytoplasmic-facing. The chain crosses the membrane as a helical span at residues 356 to 376 (YVAATVCLAVFIFLEYVRYFR). The Extracellular portion of the chain corresponds to 377 to 397 (IKPLGHTLRSLLSLFLDERDS). Residues 398 to 418 (GPLILTHIYLLLGMSLPIWLI) traverse the membrane as a helical segment. Over 419 to 432 (PRPCTQKDSLEGAR) the chain is Cytoplasmic. Residues 433–453 (ALVPYAGVLAVGVGDTVASIF) form a helical membrane-spanning segment. Residues 454–468 (GSTMGEIRWPGTKKT) are Extracellular-facing. The segment at 455-470 (STMGEIRWPGTKKTFE) is CTP-binding. A helical transmembrane segment spans residues 469–489 (FEGTMTSIFAQIISVALILIF). Residues 490–491 (DS) lie on the Cytoplasmic side of the membrane. Residues 492–512 (GVDLNYSYAWILGSISTVSLL) traverse the membrane as a helical segment. At 513–534 (EAYTTQIDNLLLPLYLLILLMA) the chain is on the extracellular side.

Belongs to the polyprenol kinase family.

It localises to the endoplasmic reticulum membrane. It catalyses the reaction a di-trans,poly-cis-dolichol + CTP = a di-trans,poly-cis-dolichyl phosphate + CDP + H(+). It functions in the pathway protein modification; protein glycosylation. In terms of biological role, catalyzes CTP-mediated phosphorylation of dolichol, the terminal step in de novo dolichyl monophosphate (Dol-P) biosynthesis. Dol-P is a lipid carrier essential for the synthesis of N-linked and O-linked oligosaccharides and for GPI anchors. This is Dolichol kinase from Mus musculus (Mouse).